We begin with the raw amino-acid sequence, 310 residues long: Zinc finger CCCH domain-containing protein 14 (310 aa).

A disordered region spans residues 56–75; that stretch reads ESLSPSPPSSSSPPSRVDTT. Residues 84–129 adopt a coiled-coil conformation; the sequence is KLILEYDELNEHYELCLNRLQSLMTELDSLRHENDSLRFENSDLLK. The segment covering 155–167 has biased composition (basic and acidic residues); that stretch reads QISDSRSAKRNNQ. Positions 155–174 are disordered; the sequence is QISDSRSAKRNNQERNSLPK. C3H1-type zinc fingers lie at residues 232–260 and 270–298; these read MMKT…HGID and RYKT…HSLT.

Highly expressed in secondary cell wall-forming tissues and the xylem cells of roots. Expressed predominantly in inflorescence stems, flowers and siliques. Highly expressed in the basal portion of stems, where cells are undergoing secondary cell wall thickening.

Functionally, functions probably as a transcriptional factor that activates genes involved in secondary cell wall biosynthesis. May play a role in both transcriptional and post-transcriptional regulation. Binds to ssDNA, dsDNA, and ribohomopolymers in vitro. Maybe involved in post-transcriptional regulation of its target genes. Targets RNA of a polygalacturonase, a well-known cell wall modifying gene. Functions redudantly with C3H15 to regulate secondary cell wall formation. C3H14 and C3H15 have overlapping roles in the regulation of secondary cell wall formation and anther development. C3H14 may contribute more to secondary cell wall thickening while C3H15 could be more important in anther development. May regulate at both the transcriptional and post-transcriptional levels the expression of many genes involved in various biological processes, particularly those associated with cell wall metabolism and pollen development. This chain is Zinc finger CCCH domain-containing protein 14, found in Arabidopsis thaliana (Mouse-ear cress).